The chain runs to 156 residues: MELTHIEDGKVRMVDVSHKDDVDRIAVAEGYIRLRSSTIEAIINKEVAKGNVIAAANIAGVMAVKKTPELIPMCHPIPITSVKFDFDIESVGIRVKCTVKSKGKTGVEMEALTGVSVALLTIWDMVKSLEKDERGNYPKTLIEVIRVVEKVKGGKE.

Substrate contacts are provided by residues 73–75 (MCH) and 109–110 (ME). Aspartate 124 is a catalytic residue.

Belongs to the MoaC family. Homohexamer; trimer of dimers.

It catalyses the reaction (8S)-3',8-cyclo-7,8-dihydroguanosine 5'-triphosphate = cyclic pyranopterin phosphate + diphosphate. The protein operates within cofactor biosynthesis; molybdopterin biosynthesis. Catalyzes the conversion of (8S)-3',8-cyclo-7,8-dihydroguanosine 5'-triphosphate to cyclic pyranopterin monophosphate (cPMP). This Archaeoglobus fulgidus (strain ATCC 49558 / DSM 4304 / JCM 9628 / NBRC 100126 / VC-16) protein is Probable cyclic pyranopterin monophosphate synthase.